The primary structure comprises 631 residues: Phosphomethylpyrimidine synthase (631 aa).

Substrate-binding positions include Asn-239, Met-268, Tyr-297, His-333, 353–355 (SRG), 394–397 (DGLR), and Glu-433. His-437 serves as a coordination point for Zn(2+). Tyr-460 contacts substrate. Zn(2+) is bound at residue His-501. [4Fe-4S] cluster is bound by residues Cys-581, Cys-584, and Cys-589.

It belongs to the ThiC family. In terms of assembly, homodimer. The cofactor is [4Fe-4S] cluster.

The catalysed reaction is 5-amino-1-(5-phospho-beta-D-ribosyl)imidazole + S-adenosyl-L-methionine = 4-amino-2-methyl-5-(phosphooxymethyl)pyrimidine + CO + 5'-deoxyadenosine + formate + L-methionine + 3 H(+). It functions in the pathway cofactor biosynthesis; thiamine diphosphate biosynthesis. In terms of biological role, catalyzes the synthesis of the hydroxymethylpyrimidine phosphate (HMP-P) moiety of thiamine from aminoimidazole ribotide (AIR) in a radical S-adenosyl-L-methionine (SAM)-dependent reaction. This is Phosphomethylpyrimidine synthase from Escherichia coli O81 (strain ED1a).